The sequence spans 4226 residues: Guanylate cyclase alpha (4226 aa).

Over 1 to 104 (MSDSKKHYNE…SFIFKGLYEQ (104 aa)) the chain is Cytoplasmic. Residues 105–125 (FLRLPNIWFLLISLLEFIPQY) traverse the membrane as a helical segment. The Extracellular segment spans residues 126–131 (QNLSNY). N-linked (GlcNAc...) asparagine glycosylation is present at asparagine 127. The helical transmembrane segment at 132-152 (MYYSKHSSFFLLLFFICVSII) threads the bilayer. Over 153–337 (KNIYEDSRRS…LGYVNKELNS (185 aa)) the chain is Cytoplasmic. A helical membrane pass occupies residues 338 to 358 (YTIIGLIFTFICVFISVLFKW). Topologically, residues 359–392 (TEDDKFRNGSHFFLITVKDNICESIVKYTLLYSN) are extracellular. The N-linked (GlcNAc...) asparagine glycan is linked to asparagine 366. A helical membrane pass occupies residues 393 to 413 (IIPISILISVDLISILQSILI). Topologically, residues 414–2083 (ENDNHISTFE…FIYGSKHLYT (1670 aa)) are cytoplasmic. Disordered stretches follow at residues 552–572 (EHSQ…NNIC), 832–904 (SSKN…SNND), 968–989 (INNN…KSSS), and 1740–1765 (NINK…NNSN). A compositionally biased stretch (low complexity) spans 558 to 570 (DNNNNNDNNNNNN). The segment covering 838-847 (TLDDPTELIS) has biased composition (acidic residues). Residues 854–873 (LRDKYEHTSDKKNDTNKNRD) are compositionally biased toward basic and acidic residues. Residues 874–904 (GANNSNNNNNKDVSNNKNKNNNNYNYNSNND) are compositionally biased toward low complexity. The span at 1745 to 1754 (YKYDKNDKHN) shows a compositional bias: basic and acidic residues. Positions 1755 to 1765 (NNNNNNNNNSN) are enriched in low complexity. A helical transmembrane segment spans residues 2084-2104 (ISIILYWNFFKNILLILPIFF). Residues 2105–2119 (YQAYASWSCVKIYPE) lie on the Extracellular side of the membrane. A helical membrane pass occupies residues 2120–2140 (LLYTFFSIFWVFIPIIYYMFL). Residues 2141 to 2169 (QHNLNYDILYNIPLFYALSRRRYNMNCFK) are Cytoplasmic-facing. Residues 2170-2190 (FLPWIFEAIFYSMIIYFFAYA) traverse the membrane as a helical segment. Residues 2191 to 2202 (ALKENSHLNNGE) lie on the Extracellular side of the membrane. A helical membrane pass occupies residues 2203-2223 (VITINTFGNICFIGCLLISIL). The Cytoplasmic portion of the chain corresponds to 2224-2235 (RLFLEGSLWSPS). Residues 2236-2256 (ILITCFGCFLFVFFPSLLFIC) traverse the membrane as a helical segment. Over 2257–2275 (FAYLSNEYIREVFRQTFLW) the chain is Extracellular. The chain crosses the membrane as a helical span at residues 2276 to 2296 (APLYVLLILWFSTCIISYIFI). Over 2297 to 2787 (NFTKSILFPN…QIHKKNKFYK (491 aa)) the chain is Cytoplasmic. Residues 2477 to 2505 (NNDNNNDDNDNDNNNNNNNNDNYNNNDHN) are disordered. Over residues 2488–2502 (DNNNNNNNNDNYNNN) the composition is skewed to low complexity. A helical membrane pass occupies residues 2788–2808 (TFTPWYRFIFLLLGVFFLYVW). Residues 2809-2828 (KLESSLSQLWNMPSDASTDV) lie on the Extracellular side of the membrane. A helical membrane pass occupies residues 2829–2849 (FILFLSLLLELVLLAATVTTF). At 2850 to 2860 (FSNIFIENFNK) the chain is on the cytoplasmic side. Residues 2861–2881 (IISAVVILIITYHVVSYSVTH) traverse the membrane as a helical segment. Residues 2882 to 2900 (IDGVFQAVLFPLYTFVILR) are Extracellular-facing. The chain crosses the membrane as a helical span at residues 2901-2921 (LPFVNAVLCNIIFLGLFIIRF). Topologically, residues 2922–2930 (NGDHFLDKK) are cytoplasmic. Residues 2931 to 2951 (GLAHYIPLFIGVDVFVGFVGY) traverse the membrane as a helical segment. Topologically, residues 2952–3008 (RLEYNQRKNFLLEYSVESSRRKQREILNTMLPPFVVDEMIYSELNEEGIPISLKAED) are extracellular. A helical transmembrane segment spans residues 3009–3029 (ISTVTIIFCDIYDFQNIVASI). One can recognise a Guanylate cyclase 1 domain in the interval 3013–3270 (TIIFCDIYDF…DTVNTASRMK (258 aa)). Over 3030–3738 (EPTRLVEVLD…SNINSIEQAL (709 aa)) the chain is Cytoplasmic. 2 disordered regions span residues 3077-3150 (EDEL…FEED) and 3201-3230 (DAND…NNKP). 2 stretches are compositionally biased toward low complexity: residues 3083 to 3098 (NKYS…NYYY) and 3108 to 3138 (NNNN…NNVN). Acidic residues predominate over residues 3140-3150 (SDDDGDFFEED). Basic and acidic residues predominate over residues 3201-3220 (DANDDTHNVNDSFNNDKAEN). Residues 3739 to 3759 (IIFLVTFVMQTLISSTVSIVF) form a helical membrane-spanning segment. Over 3760–3773 (IDHKRATQTLHINY) the chain is Extracellular. A helical membrane pass occupies residues 3774 to 3794 (FAYWSVRSVYTFFGFVLWLLF). Over 3795–3811 (HYRTRPEVSSLLNIKWM) the chain is Cytoplasmic. A helical membrane pass occupies residues 3812–3832 (IFFLNLLFISAACVFSIAYLW). The Extracellular portion of the chain corresponds to 3833–3840 (AISETDQT). A helical membrane pass occupies residues 3841–3861 (TSYTIWMTNDTIEFFFYLVIL). Residues 3862–3871 (HHNTGMLFQT) are Cytoplasmic-facing. The helical transmembrane segment at 3872-3892 (CILVDLLFITMSLTFIATSVV) threads the bilayer. A topological domain (extracellular) is located at residue lysine 3893. The helical transmembrane segment at 3894-3914 (TITTDSTVLLIPWYVAFNLIS) threads the bilayer. At 3915-4226 (TYCKESIDRR…INVNDRQSNL (312 aa)) the chain is on the cytoplasmic side. One can recognise a Guanylate cyclase 2 domain in the interval 3970–4104 (TFLFADICGF…IDVLTGNLME (135 aa)). 3 residues coordinate Mg(2+): aspartate 3975, isoleucine 3976, and aspartate 4019.

In the N-terminal section; belongs to the cation transport ATPase (P-type) (TC 3.A.3) family. Type IV subfamily. The protein in the C-terminal section; belongs to the adenylyl cyclase class-4/guanylyl cyclase family. Mg(2+) serves as cofactor. Requires Mn(2+) as cofactor.

It is found in the cell membrane. The protein resides in the cytoplasmic vesicle membrane. It catalyses the reaction GTP = 3',5'-cyclic GMP + diphosphate. Its function is as follows. Catalyzes the synthesis of the second messenger cGMP from GTP. In asexual blood stage schizonts, required for cGMP production which is essential for PKG activation, PKG-dependent Ca(2+) release, and ultimately merozoite egress from host erythrocytes. This Plasmodium falciparum (isolate 3D7) protein is Guanylate cyclase alpha.